Here is a 507-residue protein sequence, read N- to C-terminus: ATP synthase subunit alpha (507 aa).

The tract at residues 118 to 141 (VDGLGPIETTETRPIESPAPGVMD) is disordered. ATP is bound at residue 172 to 179 (GDRQTGKT).

It belongs to the ATPase alpha/beta chains family. F-type ATPases have 2 components, CF(1) - the catalytic core - and CF(0) - the membrane proton channel. CF(1) has five subunits: alpha(3), beta(3), gamma(1), delta(1), epsilon(1). CF(0) has three main subunits: a(1), b(2) and c(9-12). The alpha and beta chains form an alternating ring which encloses part of the gamma chain. CF(1) is attached to CF(0) by a central stalk formed by the gamma and epsilon chains, while a peripheral stalk is formed by the delta and b chains.

The protein localises to the cell membrane. The enzyme catalyses ATP + H2O + 4 H(+)(in) = ADP + phosphate + 5 H(+)(out). Functionally, produces ATP from ADP in the presence of a proton gradient across the membrane. The alpha chain is a regulatory subunit. The sequence is that of ATP synthase subunit alpha from Anoxybacillus flavithermus (strain DSM 21510 / WK1).